The following is a 494-amino-acid chain: Glutamate--tRNA ligase (494 aa).

A 'HIGH' region motif is present at residues 9 to 19; that stretch reads PSPTGDPHVGT. A 'KMSKS' region motif is present at residues 250 to 254; the sequence is KLSKR. Residue Lys-253 participates in ATP binding.

Belongs to the class-I aminoacyl-tRNA synthetase family. Glutamate--tRNA ligase type 1 subfamily. In terms of assembly, monomer.

It localises to the cytoplasm. The enzyme catalyses tRNA(Glu) + L-glutamate + ATP = L-glutamyl-tRNA(Glu) + AMP + diphosphate. In terms of biological role, catalyzes the attachment of glutamate to tRNA(Glu) in a two-step reaction: glutamate is first activated by ATP to form Glu-AMP and then transferred to the acceptor end of tRNA(Glu). The chain is Glutamate--tRNA ligase from Alcanivorax borkumensis (strain ATCC 700651 / DSM 11573 / NCIMB 13689 / SK2).